The chain runs to 513 residues: ATP synthase subunit alpha (513 aa).

Residue 169 to 176 coordinates ATP; it reads GDRQCGKT.

Belongs to the ATPase alpha/beta chains family. In terms of assembly, F-type ATPases have 2 components, CF(1) - the catalytic core - and CF(0) - the membrane proton channel. CF(1) has five subunits: alpha(3), beta(3), gamma(1), delta(1), epsilon(1). CF(0) has three main subunits: a(1), b(2) and c(9-12). The alpha and beta chains form an alternating ring which encloses part of the gamma chain. CF(1) is attached to CF(0) by a central stalk formed by the gamma and epsilon chains, while a peripheral stalk is formed by the delta and b chains.

Its subcellular location is the cell inner membrane. It catalyses the reaction ATP + H2O + 4 H(+)(in) = ADP + phosphate + 5 H(+)(out). In terms of biological role, produces ATP from ADP in the presence of a proton gradient across the membrane. The alpha chain is a regulatory subunit. The polypeptide is ATP synthase subunit alpha (Burkholderia vietnamiensis (strain G4 / LMG 22486) (Burkholderia cepacia (strain R1808))).